The primary structure comprises 601 residues: Glutamine--fructose-6-phosphate aminotransferase [isomerizing] (601 aa).

Residue cysteine 2 is the Nucleophile; for GATase activity of the active site. The Glutamine amidotransferase type-2 domain maps to 2 to 218; that stretch reads CGIVGYIGYD…DHEIVIVKKD (217 aa). 2 SIS domains span residues 284–423 and 453–591; these read IIND…EHGR and IATD…VDKP. Residue lysine 596 is the For Fru-6P isomerization activity of the active site.

As to quaternary structure, homodimer.

It localises to the cytoplasm. It catalyses the reaction D-fructose 6-phosphate + L-glutamine = D-glucosamine 6-phosphate + L-glutamate. Catalyzes the first step in hexosamine metabolism, converting fructose-6P into glucosamine-6P using glutamine as a nitrogen source. In Staphylococcus aureus (strain COL), this protein is Glutamine--fructose-6-phosphate aminotransferase [isomerizing].